Reading from the N-terminus, the 1283-residue chain is Peroxisomal ATPase PEX1 (1283 aa).

The tract at residues 346–367 (SKTKQNVLSPEKEKQMSEPLDQ) is disordered. Phosphoserine is present on S354. Residues 355–367 (PEKEKQMSEPLDQ) show a composition bias toward basic and acidic residues. ATP-binding positions include 599-606 (GGKGSGKS) and 881-888 (GPPGTGKT). 3 positions are modified to phosphoserine: S1181, S1209, and S1211. Positions 1260–1283 (FQNPKRRKNQSGTMFRPGQKVTLA) are disordered.

This sequence belongs to the AAA ATPase family. Homooligomer; homooligomerizes in the cytosol, interaction with PEX6 promotes dissociation of the homooligomer. Interacts with PEX6; forming the PEX1-PEX6 AAA ATPase complex, which is composed of a heterohexamer formed by a trimer of PEX1-PEX6 dimers. Interacts indirectly with PEX26, via its interaction with PEX6.

The protein resides in the cytoplasm. Its subcellular location is the cytosol. The protein localises to the peroxisome membrane. The enzyme catalyses ATP + H2O = ADP + phosphate + H(+). Component of the PEX1-PEX6 AAA ATPase complex, a protein dislocase complex that mediates the ATP-dependent extraction of the PEX5 receptor from peroxisomal membranes, an essential step for PEX5 recycling. Specifically recognizes PEX5 monoubiquitinated at 'Cys-11', and pulls it out of the peroxisome lumen through the PEX2-PEX10-PEX12 retrotranslocation channel. Extraction by the PEX1-PEX6 AAA ATPase complex is accompanied by unfolding of the TPR repeats and release of bound cargo from PEX5. The polypeptide is Peroxisomal ATPase PEX1 (Homo sapiens (Human)).